The following is an 819-amino-acid chain: Leucine--tRNA ligase (819 aa).

The 'HIGH' region signature appears at 36–46; sequence PYPSGKIHMGH. The 'KMSKS' region signature appears at 586 to 590; the sequence is KMSKS. ATP is bound at residue K589.

The protein belongs to the class-I aminoacyl-tRNA synthetase family.

The protein localises to the cytoplasm. The catalysed reaction is tRNA(Leu) + L-leucine + ATP = L-leucyl-tRNA(Leu) + AMP + diphosphate. This chain is Leucine--tRNA ligase, found in Wolbachia pipientis subsp. Culex pipiens (strain wPip).